The following is a 410-amino-acid chain: Ribosomal protein S6 kinase-related protein (410 aa).

In terms of domain architecture, Protein kinase spans Leu-107–Val-274. ATP is bound by residues Val-113–Val-121 and Lys-136. Asp-229 serves as the catalytic Proton acceptor.

This sequence belongs to the protein kinase superfamily. Ser/Thr protein kinase family.

The catalysed reaction is L-seryl-[protein] + ATP = O-phospho-L-seryl-[protein] + ADP + H(+). It carries out the reaction L-threonyl-[protein] + ATP = O-phospho-L-threonyl-[protein] + ADP + H(+). In Homo sapiens (Human), this protein is Ribosomal protein S6 kinase-related protein.